The primary structure comprises 93 residues: Small ribosomal subunit protein bS20c (93 aa).

The protein belongs to the bacterial ribosomal protein bS20 family.

It is found in the plastid. Its subcellular location is the chloroplast. Functionally, binds directly to 16S ribosomal RNA. The protein is Small ribosomal subunit protein bS20c of Thalassiosira pseudonana (Marine diatom).